Reading from the N-terminus, the 143-residue chain is Large ribosomal subunit protein uL15 (143 aa).

Residues 1-56 form a disordered region; the sequence is MQLNSIKPAAGAKHAKRRVGRGIGSGLGKTAGRGHKGQKSRAGGYHKVGFEGGQMP. Gly residues predominate over residues 21-31; it reads RGIGSGLGKTA.

This sequence belongs to the universal ribosomal protein uL15 family. As to quaternary structure, part of the 50S ribosomal subunit.

In terms of biological role, binds to the 23S rRNA. The protein is Large ribosomal subunit protein uL15 of Verminephrobacter eiseniae (strain EF01-2).